Here is a 233-residue protein sequence, read N- to C-terminus: Putative N-acetylmannosamine-6-phosphate 2-epimerase (233 aa).

Belongs to the NanE family.

The catalysed reaction is an N-acyl-D-glucosamine 6-phosphate = an N-acyl-D-mannosamine 6-phosphate. It participates in amino-sugar metabolism; N-acetylneuraminate degradation; D-fructose 6-phosphate from N-acetylneuraminate: step 3/5. Its function is as follows. Converts N-acetylmannosamine-6-phosphate (ManNAc-6-P) to N-acetylglucosamine-6-phosphate (GlcNAc-6-P). This Yersinia pseudotuberculosis serotype O:1b (strain IP 31758) protein is Putative N-acetylmannosamine-6-phosphate 2-epimerase.